We begin with the raw amino-acid sequence, 237 residues long: Ribonuclease PH (237 aa).

Phosphate is bound by residues Arg-86 and 124–126; that span reads GTR.

The protein belongs to the RNase PH family. In terms of assembly, homohexameric ring arranged as a trimer of dimers.

It carries out the reaction tRNA(n+1) + phosphate = tRNA(n) + a ribonucleoside 5'-diphosphate. Its function is as follows. Phosphorolytic 3'-5' exoribonuclease that plays an important role in tRNA 3'-end maturation. Removes nucleotide residues following the 3'-CCA terminus of tRNAs; can also add nucleotides to the ends of RNA molecules by using nucleoside diphosphates as substrates, but this may not be physiologically important. Probably plays a role in initiation of 16S rRNA degradation (leading to ribosome degradation) during starvation. The chain is Ribonuclease PH from Shewanella sp. (strain ANA-3).